The following is a 130-amino-acid chain: RxLR effector protein PITG_14783 (130 aa).

An N-terminal signal peptide occupies residues 1–20 (MRLPYVFAATMATLLVSSNA). Residues 27–58 (AMLSSPNEQHQRQLRSHQTPVEDQEPDEERSL) form a disordered region. The short motif at 38 to 56 (RQLRSHQTPVEDQEPDEER) is the RxLR-dEER element.

This sequence belongs to the RxLR effector family.

Its subcellular location is the secreted. It is found in the host nucleus. It localises to the host cytoplasm. Functionally, effector that enhances P.infestans colonization of Nicotiana benthamiana leaves. The sequence is that of RxLR effector protein PITG_14783 from Phytophthora infestans (strain T30-4) (Potato late blight agent).